The following is a 493-amino-acid chain: Glycerol kinase (493 aa).

ADP is bound at residue threonine 12. 3 residues coordinate ATP: threonine 12, threonine 13, and serine 14. Threonine 12 lines the sn-glycerol 3-phosphate pocket. Arginine 16 lines the ADP pocket. Sn-glycerol 3-phosphate is bound by residues arginine 82, glutamate 83, tyrosine 132, and aspartate 239. Glycerol contacts are provided by arginine 82, glutamate 83, tyrosine 132, aspartate 239, and glutamine 240. 2 residues coordinate ADP: threonine 261 and glycine 303. The ATP site is built by threonine 261, glycine 303, glutamine 307, and glycine 402. The ADP site is built by glycine 402 and asparagine 406.

This sequence belongs to the FGGY kinase family.

It catalyses the reaction glycerol + ATP = sn-glycerol 3-phosphate + ADP + H(+). It functions in the pathway polyol metabolism; glycerol degradation via glycerol kinase pathway; sn-glycerol 3-phosphate from glycerol: step 1/1. Functionally, key enzyme in the regulation of glycerol uptake and metabolism. Catalyzes the phosphorylation of glycerol to yield sn-glycerol 3-phosphate. The chain is Glycerol kinase from Thermococcus gammatolerans (strain DSM 15229 / JCM 11827 / EJ3).